The chain runs to 261 residues: tRNA pseudouridine synthase A (261 aa).

The active-site Nucleophile is D51. A substrate-binding site is contributed by Y109.

Belongs to the tRNA pseudouridine synthase TruA family. In terms of assembly, homodimer.

The catalysed reaction is uridine(38/39/40) in tRNA = pseudouridine(38/39/40) in tRNA. Formation of pseudouridine at positions 38, 39 and 40 in the anticodon stem and loop of transfer RNAs. The sequence is that of tRNA pseudouridine synthase A from Shewanella frigidimarina (strain NCIMB 400).